Reading from the N-terminus, the 387-residue chain is MRVAMMTREYPPEVYGGAGVHVTELVAQLRKLCDVDVHCMGAPRDGAYVAHPDPTLRGANAALTMLSADLNMVNNAEAATVVHSHTWYTGLAGHLASLLYGVPHVLTAHSLEPLRPWKAEQLGGGYQVSSWVERTAVEAADAVIAVSSGMRDDVLRTYPALDPDRVHVVRNGIDTTVWYPAEPGPDESVLAELGVDLNRPIVAFVGRITRQKGVAHLVAAAHRFAPDVQLVLCAGAPDTPQIAEEVSSAVQQLAQARTGVFWVREMLPTHKIREILSAATVFVCPSVYEPLGIVNLEAMACATAVVASDVGGIPEVVADGRTGLLVHYDANDTEAYEARLAEAVNSLVADPDRAREYGVAGRERCIEEFSWAHIAEQTLEIYRKVSA.

This sequence belongs to the glycosyltransferase group 1 family.

The catalysed reaction is ADP-alpha-D-glucose + alpha-D-glucose 1-phosphate = alpha-maltose 1-phosphate + ADP + H(+). It functions in the pathway glycan biosynthesis; glycogen biosynthesis. Involved in the biosynthesis of the maltose-1-phosphate (M1P) building block required for alpha-glucan production by the key enzyme GlgE. Catalyzes the formation of an alpha-1,4 linkage between glucose from ADP-glucose and glucose 1-phosphate (G1P) to yield maltose-1-phosphate (M1P). The polypeptide is Alpha-maltose-1-phosphate synthase (Mycolicibacterium smegmatis (strain ATCC 700084 / mc(2)155) (Mycobacterium smegmatis)).